Here is a 1997-residue protein sequence, read N- to C-terminus: Protein MOR1 (1997 aa).

HEAT repeat units lie at residues 48–86 (DARL…AADA) and 164–202 (VVPP…WIGK). A disordered region spans residues 236–264 (RKIRSEQEKELEEEVVPEAAGTNNSEEAV). 3 HEAT repeats span residues 321–359 (PGDF…GLRT), 362–400 (SGNS…SGCI), and 441–479 (LKLH…MVGM). Positions 501–576 (IGSASDTTSG…DGGPQSKASA (76 aa)) are disordered. A compositionally biased stretch (polar residues) spans 504–520 (ASDTTSGTVAASNTGVG). A compositionally biased stretch (low complexity) spans 529–539 (SSSMRRSAASM). 4 HEAT repeats span residues 848-886 (EDIS…EAHK), 890-928 (PTGT…AMGP), 931-969 (EKSS…AAQL), and 1007-1045 (PSEA…ICGQ). A disordered region spans residues 1087–1115 (MSLPSKAGSKNNKHGPNDRGSNVSKAVSQ). HEAT repeat units lie at residues 1233-1259 (TTCL…MLTE), 1260-1294 (AEAA…MVNI), 1295-1332 (YSLP…HHGT), and 1334-1372 (VSGL…NLGD). Positions 1400–1410 (MDKRREGRPGD) are enriched in basic and acidic residues. A disordered region spans residues 1400 to 1436 (MDKRREGRPGDARAALRRSVRENGSDIAEQSGEAVSR). The HEAT 14 repeat unit spans residues 1539–1579 (RSCKYVLNTLMQTFQIKRLAHAVKEGTLDNLITELLLWLLD). Residues 1755 to 1776 (MGQTHWGDAGSNNPNPSTHSTD) are disordered. The span at 1764–1776 (GSNNPNPSTHSTD) shows a compositional bias: polar residues.

Belongs to the TOG/XMAP215 family.

It is found in the cytoplasm. The protein localises to the cytoskeleton. In terms of biological role, microtubule-associated protein that is essential for cortical microtubules organization and function. In Oryza sativa subsp. japonica (Rice), this protein is Protein MOR1 (MOR1).